The chain runs to 454 residues: MPVPQVAIVGRPNVGKSSLFNWLARRRLAIVDNFEGVTRDRMTTLIESDDQFFELIDTGGMGVEDADDLTSDVRRQIDMAIASADVILLVVDVQTGLMPLDEEVVERLRGVERPVILVANKADQEHQDIHADEFRRLGRGHLITVSTTQNRHRDDLIQVIVDRLPEKDEDLVAPESSMKIAIVGRRNVGKSTFVNTLAESDRMIVSEVAGTTRDSVDVRFEIDGQTFLAIDTPGLRKRKSIRTDLDFYGTHRAQRSVRRADVVLMFFDALEKTSKVDKQLVGYIMEHHKPVIFVVNKWDKVDKEVPTERWVKYLRHQFTTLSYAPIAFITGQTGRNVKAVMNHAAMLYKQAQSRVSTGELNRILRAAIEQHPPAMYQGRRPKIFYATQVSTEPPTVVVMCSDPKALTHDYQRYLIGWMRDHLPFGEVPIKLYMQQRSRSEAKAERSGQGRSLES.

2 consecutive EngA-type G domains span residues 4-168 (PQVA…PEKD) and 178-352 (MKIA…KQAQ). GTP is bound by residues 10–17 (GRPNVGKS), 57–61 (DTGGM), 120–123 (NKAD), 184–191 (GRRNVGKS), 231–235 (DTPGL), and 296–299 (NKWD). The KH-like domain maps to 353-437 (SRVSTGELNR…PIKLYMQQRS (85 aa)).

This sequence belongs to the TRAFAC class TrmE-Era-EngA-EngB-Septin-like GTPase superfamily. EngA (Der) GTPase family. As to quaternary structure, associates with the 50S ribosomal subunit.

In terms of biological role, GTPase that plays an essential role in the late steps of ribosome biogenesis. This Rhodopirellula baltica (strain DSM 10527 / NCIMB 13988 / SH1) protein is GTPase Der.